The sequence spans 126 residues: Putative phosphotransferase enzyme IIB component UU178 (126 aa).

Residues 11 to 31 (LIIFLGIITFGIFIIYFFTKA) traverse the membrane as a helical segment. A PTS EIIB type-1 domain is found at 49-126 (PFSLNDFYNC…KELIKKDLFS (78 aa)).

This sequence to M.genitalium MG129 and M.pneumoniae MPN268.

It is found in the membrane. In terms of biological role, the phosphoenolpyruvate-dependent sugar phosphotransferase system (PTS), a major carbohydrate active -transport system, catalyzes the phosphorylation of incoming sugar substrates concomitant with their translocation across the cell membrane. In Ureaplasma parvum serovar 3 (strain ATCC 700970), this protein is Putative phosphotransferase enzyme IIB component UU178.